Reading from the N-terminus, the 275-residue chain is 2,3,4,5-tetrahydropyridine-2,6-dicarboxylate N-succinyltransferase (275 aa).

Residues Arg-106 and Asp-143 each coordinate substrate.

It belongs to the transferase hexapeptide repeat family. As to quaternary structure, homotrimer.

Its subcellular location is the cytoplasm. The catalysed reaction is (S)-2,3,4,5-tetrahydrodipicolinate + succinyl-CoA + H2O = (S)-2-succinylamino-6-oxoheptanedioate + CoA. The protein operates within amino-acid biosynthesis; L-lysine biosynthesis via DAP pathway; LL-2,6-diaminopimelate from (S)-tetrahydrodipicolinate (succinylase route): step 1/3. The sequence is that of 2,3,4,5-tetrahydropyridine-2,6-dicarboxylate N-succinyltransferase from Rickettsia bellii (strain RML369-C).